Consider the following 1214-residue polypeptide: MEHLIFLLIFGGYSPSIAQITSSTTTTTPVPAANRRTIRVGVAAVQSTELDSIGWPMSGGAINLAIQKLRDDGFIAAFDFEINVNYTECDRSLGAAVGMEFMRSKKYDVVIGAPCQDPMEIMATMATYYTTPLLAWGLVTDSKFTDAERYPYLTNIMANSLSLGFSLVKLFEMMDWDRVALLYETSPQDYPLSIINDVETAINEYEDYSVNVVVKQAVPSGDLNDAQYISVLNRIKSRCRIVVAVIQTATPRRKYLRMITEQNMVSDEYVHIWLGLRSIGFGKQSAGLTKCELNCLSSGLTPVWEVLPDDGWNERAKLAATRLLVMDLSTDVPDVNYLNTFTSQCGAQVVNPPVSCETEQCKNASTSPPSAFARSLHDVFYLYGLAITNIYNTNPVNLANGQAINDAMQLTFAGDCSAQFFSKKNILTFLGLTGEVSINANNTRVPKLMLYALNENYDQASFMNLTYSLDGGASVSLGYTNEASLWFWYNGKRPLTIPICGFLGTECPQTFVDQYGALVFSIGGVLALAMLFLITCFFYVLRQRKLERDRIDAEWQIPLVKLQVPPKREKERMSKRSIQSGPSNITDTSKMTFDNTFSNYSIFYLDKEPVLSTAHPASNLDRTDYDTFVKLRKLDHDNINKFVGLSIDGAEYLAVWKMCMRGSLQDIIGQGNFSIDPFFMFCVIRDMAEGLKYLHNSFLHVHANLRSGTVLINESWQAKLTDFGLGNLAEEKKPMKRRQLWMAPEVIRGTLLPHQVEKPADIYSLAIIASEVLTRKEAWNMSERKDTVDEIVYRIKKGGPNSIRPDLDMDGVEINHSLLVLIRDCWSEDPTDRPGADIICNLLKNMMPKKGNLMDHVFNILEDYTTNLEVEVEDRTKELTAEKKKADVLLGRMLPKQVAERLKQGQTVEPEGFDSVTVFFSDVVKFTQLSQKCSPFQVVNLLNDLYSNFDAIIEEHGVYKVESIGDGYLCVSGLPQRNGNAHIKCIVELSLDFMAYCKAFKIPHLPREKVELRVGVNSGPCVAGVVGLSMPRYCLFGDTVNTASRMESNGKPSHIHLSAAAYTLLMKHYPNQYNTASRGDVIIKVGPLLGLFRPFQGKGVMETFWVFERNNQFMGNSSNMAYNPENKKKQKNDDEDVDDESSDGSSRAPNTPPMHDVNANSPPRQRKPGPPSSSPTFSKRSVSPILEEKAREIHNEETEALYRQFRRQETLALM.

The N-terminal stretch at 1 to 18 (MEHLIFLLIFGGYSPSIA) is a signal peptide. Over 19-517 (QITSSTTTTT…PQTFVDQYGA (499 aa)) the chain is Extracellular. N-linked (GlcNAc...) asparagine glycosylation is found at N85, N363, N441, and N464. The chain crosses the membrane as a helical span at residues 518–538 (LVFSIGGVLALAMLFLITCFF). Residues 539–1214 (YVLRQRKLER…FRRQETLALM (676 aa)) lie on the Cytoplasmic side of the membrane. The Protein kinase domain occupies 572–859 (RMSKRSIQSG…KGNLMDHVFN (288 aa)). One can recognise a Guanylate cyclase domain in the interval 917 to 1047 (TVFFSDVVKF…DTVNTASRME (131 aa)). A disordered region spans residues 1116 to 1197 (NSSNMAYNPE…EKAREIHNEE (82 aa)). The span at 1133-1142 (DDEDVDDESS) shows a compositional bias: acidic residues. A compositionally biased stretch (basic and acidic residues) spans 1186–1197 (LEEKAREIHNEE).

Belongs to the adenylyl cyclase class-4/guanylyl cyclase family. In terms of tissue distribution, expressed asymmetrically in ASE right (ASER) sensory neuron.

It is found in the cell membrane. It carries out the reaction GTP = 3',5'-cyclic GMP + diphosphate. In terms of biological role, guanylate cyclase involved in the production of the second messenger cGMP. The protein is Receptor-type guanylate cyclase gcy-19 of Caenorhabditis briggsae.